Reading from the N-terminus, the 174-residue chain is Acetolactate synthase small subunit (174 aa).

Residues 4–78 (TLSVLVQDEA…NILNVQDVTN (75 aa)) enclose the ACT domain.

It belongs to the acetolactate synthase small subunit family. Dimer of large and small chains.

Its subcellular location is the plastid. The protein resides in the chloroplast. The catalysed reaction is 2 pyruvate + H(+) = (2S)-2-acetolactate + CO2. The protein operates within amino-acid biosynthesis; L-isoleucine biosynthesis; L-isoleucine from 2-oxobutanoate: step 1/4. It participates in amino-acid biosynthesis; L-valine biosynthesis; L-valine from pyruvate: step 1/4. This is Acetolactate synthase small subunit (ilvH) from Pyropia yezoensis (Susabi-nori).